The primary structure comprises 443 residues: Thymidine phosphorylase (443 aa).

It belongs to the thymidine/pyrimidine-nucleoside phosphorylase family. As to quaternary structure, homodimer.

It catalyses the reaction thymidine + phosphate = 2-deoxy-alpha-D-ribose 1-phosphate + thymine. The protein operates within pyrimidine metabolism; dTMP biosynthesis via salvage pathway; dTMP from thymine: step 1/2. In terms of biological role, the enzymes which catalyze the reversible phosphorolysis of pyrimidine nucleosides are involved in the degradation of these compounds and in their utilization as carbon and energy sources, or in the rescue of pyrimidine bases for nucleotide synthesis. The protein is Thymidine phosphorylase of Aliivibrio fischeri (strain ATCC 700601 / ES114) (Vibrio fischeri).